We begin with the raw amino-acid sequence, 248 residues long: Ubiquinone biosynthesis O-methyltransferase (248 aa).

S-adenosyl-L-methionine is bound by residues Arg41, Gly72, Asp93, and Met136.

It belongs to the methyltransferase superfamily. UbiG/COQ3 family.

The enzyme catalyses a 3-demethylubiquinol + S-adenosyl-L-methionine = a ubiquinol + S-adenosyl-L-homocysteine + H(+). The catalysed reaction is a 3-(all-trans-polyprenyl)benzene-1,2-diol + S-adenosyl-L-methionine = a 2-methoxy-6-(all-trans-polyprenyl)phenol + S-adenosyl-L-homocysteine + H(+). It participates in cofactor biosynthesis; ubiquinone biosynthesis. O-methyltransferase that catalyzes the 2 O-methylation steps in the ubiquinone biosynthetic pathway. This chain is Ubiquinone biosynthesis O-methyltransferase, found in Rhizobium etli (strain CIAT 652).